We begin with the raw amino-acid sequence, 548 residues long: Chaperonin GroEL (548 aa).

ATP contacts are provided by residues 30–33 (TLGP), Lys51, 87–91 (DGTTT), Gly415, 479–481 (NAA), and Asp495. A disordered region spans residues 526–548 (KEDKSSDLGSAPAGGMGGMGGMM). Residues 537–548 (PAGGMGGMGGMM) are compositionally biased toward gly residues.

This sequence belongs to the chaperonin (HSP60) family. Forms a cylinder of 14 subunits composed of two heptameric rings stacked back-to-back. Interacts with the co-chaperonin GroES.

It is found in the cytoplasm. The catalysed reaction is ATP + H2O + a folded polypeptide = ADP + phosphate + an unfolded polypeptide.. Together with its co-chaperonin GroES, plays an essential role in assisting protein folding. The GroEL-GroES system forms a nano-cage that allows encapsulation of the non-native substrate proteins and provides a physical environment optimized to promote and accelerate protein folding. This Buchnera aphidicola subsp. Pterocomma populeum protein is Chaperonin GroEL.